Here is a 1378-residue protein sequence, read N- to C-terminus: DNA-directed RNA polymerase subunit beta (1378 aa).

This sequence belongs to the RNA polymerase beta chain family. In terms of assembly, the RNAP catalytic core consists of 2 alpha, 1 beta, 1 beta' and 1 omega subunit. When a sigma factor is associated with the core the holoenzyme is formed, which can initiate transcription.

The catalysed reaction is RNA(n) + a ribonucleoside 5'-triphosphate = RNA(n+1) + diphosphate. Its function is as follows. DNA-dependent RNA polymerase catalyzes the transcription of DNA into RNA using the four ribonucleoside triphosphates as substrates. This is DNA-directed RNA polymerase subunit beta from Ruegeria pomeroyi (strain ATCC 700808 / DSM 15171 / DSS-3) (Silicibacter pomeroyi).